We begin with the raw amino-acid sequence, 388 residues long: Galactokinase (388 aa).

Residue 33–36 participates in substrate binding; it reads EHTD. ATP is bound by residues serine 67 and 124 to 130; that span reads GAGLSSS. Mg(2+) is bound by residues serine 130 and glutamate 162. The active-site Proton acceptor is aspartate 174. Tyrosine 224 provides a ligand contact to substrate.

It belongs to the GHMP kinase family. GalK subfamily.

The protein localises to the cytoplasm. It carries out the reaction alpha-D-galactose + ATP = alpha-D-galactose 1-phosphate + ADP + H(+). It functions in the pathway carbohydrate metabolism; galactose metabolism. In terms of biological role, catalyzes the transfer of the gamma-phosphate of ATP to D-galactose to form alpha-D-galactose-1-phosphate (Gal-1-P). This chain is Galactokinase, found in Lacticaseibacillus casei (strain BL23) (Lactobacillus casei).